We begin with the raw amino-acid sequence, 377 residues long: Adaptive-response sensory kinase SasA (377 aa).

The Histidine kinase domain occupies Met-154 to Arg-373. The residue at position 157 (His-157) is a Phosphohistidine; by autocatalysis.

As to quaternary structure, homooligomerizes. Interacts with KaiC. Participates in the KaiABC clock complex, whose core is composed of a KaiC homohexamer, 6 KaiB and up to 6 KaiA dimers. SasA and KaiB(fs) compete to bind to KaiC.

The enzyme catalyses ATP + protein L-histidine = ADP + protein N-phospho-L-histidine.. In terms of biological role, member of the two-component regulatory system SasA/RpaA involved in genome-wide circadian gene expression. One of several clock output pathways. Participates in the Kai clock protein complex, the main circadian regulator in cyanobacteria, via its interaction with KaiC. KaiC enhances the autophosphorylation activity of SasA, which then transfers its phosphate group to RpaA to activate it. In addition to its output function, recruits fold-shifted KaiB (KaiB(fs)) to KaiC to cooperatively form the KaiB(6):KaiC(6) complex (independent of SasA kinase activity). Required for robustness of the circadian rhythm of gene expression and is involved in clock output, also required for adaptation to light/dark cycles. The sequence is that of Adaptive-response sensory kinase SasA from Synechococcus sp. (strain JA-3-3Ab) (Cyanobacteria bacterium Yellowstone A-Prime).